Consider the following 498-residue polypeptide: Aminotransferase swnA (498 aa).

It belongs to the class-I pyridoxal-phosphate-dependent aminotransferase family. Pyridoxal 5'-phosphate is required as a cofactor.

It participates in mycotoxin biosynthesis. In terms of biological role, aminotransferase; part of the gene cluster that mediates the biosynthesis of swainsonine (SW), a cytotoxic fungal alkaloid and a potential cancer therapy drug. Swainsonine production occurs via a multibranched pathway and is dispensable for fungal colonization of plants and infection of insect hosts. The first step of swainsonine biosynthesis is the production of the precursor pipecolic acid (PA) via conversion of L-lysine (Lys) to 1-piperideine-6-carboxylate (P6C) by the aminotransferase swnA, the latter being further reduced to PA by the reductase swnR. PA can be converted from lysine by both the SW biosynthetic cluster and the unclustered genes such as lysine cyclodeaminase. The PKS-NRPS hybrid synthetase swnK uptakes and condensates PA and malonyl-CoA with and without skipping of the ketoreductase (KR) domain in order to produce 3 intermediates, 1-oxoindolizidine, (1S)-1-hydroxyindolizin, and (1R)-1-hydroxyindolizine; with the transisomer (1S)-1-hydroxyindolizin being predominant. The terminal thioester reductase (TE) domain of swnK is involved in reduction of the thioester bond to release the intermediate aldehydes. The oxidoreductase swnN could contribute to the reduction of 1-oxoindolizidine to (1S)-1-hydroxyindolizin and (1R)-1-hydroxyindolizine, contributing to the major route of SW production. The dioxygenase swnH2 would be responsible for the oxidization of (1R)-1-hydroxyindolizine into (1R,2S)-1,2-dihydroxyindolizine and of (1S)-1-hydroxyindolizin to yield both (1R,2S)-1,2-dihydroxyindolizine and (1S,2S)-1,2-dihydroxyindolizine. The dioxygenase swnH1 then performs the conversion of the 1,2-dihydroxyindolizine epimers to SW. The chain is Aminotransferase swnA from Metarhizium robertsii (strain ARSEF 23 / ATCC MYA-3075) (Metarhizium anisopliae (strain ARSEF 23)).